Here is a 355-residue protein sequence, read N- to C-terminus: Peptide chain release factor 1 (355 aa).

Glutamine 233 bears the N5-methylglutamine mark.

Belongs to the prokaryotic/mitochondrial release factor family. In terms of processing, methylated by PrmC. Methylation increases the termination efficiency of RF1.

The protein resides in the cytoplasm. In terms of biological role, peptide chain release factor 1 directs the termination of translation in response to the peptide chain termination codons UAG and UAA. The sequence is that of Peptide chain release factor 1 from Amoebophilus asiaticus (strain 5a2).